Reading from the N-terminus, the 414-residue chain is Tryptophan synthase beta chain (414 aa).

Position 108 is an N6-(pyridoxal phosphate)lysine (K108).

Belongs to the TrpB family. In terms of assembly, tetramer of two alpha and two beta chains. The cofactor is pyridoxal 5'-phosphate.

It carries out the reaction (1S,2R)-1-C-(indol-3-yl)glycerol 3-phosphate + L-serine = D-glyceraldehyde 3-phosphate + L-tryptophan + H2O. The protein operates within amino-acid biosynthesis; L-tryptophan biosynthesis; L-tryptophan from chorismate: step 5/5. Functionally, the beta subunit is responsible for the synthesis of L-tryptophan from indole and L-serine. This is Tryptophan synthase beta chain from Beijerinckia indica subsp. indica (strain ATCC 9039 / DSM 1715 / NCIMB 8712).